Consider the following 664-residue polypeptide: Delta-like protein C (664 aa).

The N-terminal stretch at M1–S20 is a signal peptide. At S21–L511 the chain is on the extracellular side. The 45-residue stretch at V154 to C198 folds into the DSL domain. 27 disulfide bridges follow: C156–C165, C169–C181, C189–C198, C203–C214, C207–C220, C222–C231, C234–C245, C240–C251, C253–C262, C269–C281, C275–C291, C293–C302, C309–C320, C314–C329, C331–C340, C347–C358, C352–C368, C370–C379, C386–C397, C391–C406, C408–C417, C424–C435, C429–C444, C446–C455, C462–C473, C467–C482, and C484–C493. A glycan (N-linked (GlcNAc...) asparagine) is linked at N173. EGF-like domains lie at T199–D232, E233–N263, and D265–E303. Residues E305–E341 form the EGF-like 4; calcium-binding domain. 2 consecutive EGF-like domains span residues S343–E380 and K382–E418. An EGF-like 7; calcium-binding domain is found at N420 to R456. One can recognise an EGF-like 8 domain in the interval R458 to E494. A helical transmembrane segment spans residues I512–V532. At L533 to V664 the chain is on the cytoplasmic side.

Ubiquitinated by mib, leading to its endocytosis and subsequent degradation. Strongly expressed in the early retina, where it precedes other delta proteins. Also expressed in cranial ganglia, in sensory epithelia including ear and lateral line and in scattered epidermal cells. In the mesoderm, expression is visible by 50% epiboly; it is expressed subsequently in the tail bud, in stripes in the presomitic mesoderm and in the posterior half of each somite. Also expressed in notochord, blood vessels and pronephros. In contrast to other delta proteins, it is not expressed in the majority of nascent primary neurons. In somites, it marks the posterior part of each formed somite, while deltaD (dld) marks the anterior part.

The protein localises to the membrane. Its function is as follows. Acts as a ligand for Notch receptors and is involved in somitogenesis. Can activate Notch receptors. Required in somite segmentation to keep the oscillations of neighboring presomitic mesoderm cells synchronized. This chain is Delta-like protein C (dlc), found in Danio rerio (Zebrafish).